The chain runs to 186 residues: Peptidyl-tRNA hydrolase (186 aa).

Tyrosine 14 contacts tRNA. The Proton acceptor role is filled by histidine 19. Tyrosine 60 and asparagine 62 together coordinate tRNA.

This sequence belongs to the PTH family. As to quaternary structure, monomer.

It is found in the cytoplasm. The catalysed reaction is an N-acyl-L-alpha-aminoacyl-tRNA + H2O = an N-acyl-L-amino acid + a tRNA + H(+). Hydrolyzes ribosome-free peptidyl-tRNAs (with 1 or more amino acids incorporated), which drop off the ribosome during protein synthesis, or as a result of ribosome stalling. Functionally, catalyzes the release of premature peptidyl moieties from peptidyl-tRNA molecules trapped in stalled 50S ribosomal subunits, and thus maintains levels of free tRNAs and 50S ribosomes. The chain is Peptidyl-tRNA hydrolase from Mycoplasmopsis pulmonis (strain UAB CTIP) (Mycoplasma pulmonis).